The sequence spans 63 residues: Odorranain-B1 (63 aa).

An N-terminal signal peptide occupies residues 1–22 (MFTTKKPLLLLFFLGIISLSVC). Positions 23-41 (EQERDADEEDGGEVTEEEV) are excised as a propeptide.

This sequence belongs to the frog skin active peptide (FSAP) family. Brevinin subfamily. Expressed by the skin glands.

It is found in the secreted. In Odorrana hainanensis (Odor frog), this protein is Odorranain-B1.